The following is a 534-amino-acid chain: Bifunctional pantoate ligase/cytidylate kinase (534 aa).

The tract at residues 1–302 is pantoate--beta-alanine ligase; sequence MRLLTTVAAL…LGSTRLIDNT (302 aa). 48 to 55 provides a ligand contact to ATP; sequence MGSLHQGH. The active-site Proton donor is His-55. Gln-79 is a (R)-pantoate binding site. Gln-79 is a beta-alanine binding site. ATP is bound at residue 172-175; that stretch reads GQKD. (R)-pantoate is bound at residue Gln-178. Residues Val-201 and 209–212 each bind ATP; that span reads CSSR. Residues 303-534 form a cytidylate kinase region; that stretch reads ILRDRQPIIA…DYYQQRLSQW (232 aa).

It in the N-terminal section; belongs to the pantothenate synthetase family. The protein in the C-terminal section; belongs to the cytidylate kinase family. Type 1 subfamily.

The protein localises to the cytoplasm. It catalyses the reaction (R)-pantoate + beta-alanine + ATP = (R)-pantothenate + AMP + diphosphate + H(+). The enzyme catalyses CMP + ATP = CDP + ADP. It carries out the reaction dCMP + ATP = dCDP + ADP. It functions in the pathway cofactor biosynthesis; (R)-pantothenate biosynthesis; (R)-pantothenate from (R)-pantoate and beta-alanine: step 1/1. Catalyzes the condensation of pantoate with beta-alanine in an ATP-dependent reaction via a pantoyl-adenylate intermediate. In terms of biological role, catalyzes the transfer of a phosphate group from ATP to either CMP or dCMP to form CDP or dCDP and ADP, respectively. This chain is Bifunctional pantoate ligase/cytidylate kinase, found in Trichormus variabilis (strain ATCC 29413 / PCC 7937) (Anabaena variabilis).